A 545-amino-acid chain; its full sequence is Calcium-dependent protein kinase 6 (545 aa).

Glycine 2 carries N-myristoyl glycine lipidation. The segment covering 34-43 has biased composition (low complexity); sequence CSSTSTATSS. The interval 34–58 is disordered; sequence CSSTSTATSSGGRMPIRSHQQRLSS. The 259-residue stretch at 74–332 folds into the Protein kinase domain; that stretch reads YTVGRKLGQG…AHQVLCHPWV (259 aa). ATP contacts are provided by residues 80–88 and lysine 103; that span reads LGQGQFGTT. Aspartate 198 serves as the catalytic Proton acceptor. Positions 338-368 are autoinhibitory domain; that stretch reads APDRPLAPAVLSRLKQFSAMNRLKKMALRVI. 4 EF-hand domains span residues 375–410, 411–446, 447–482, and 486–516; these read EELA…YGSN, LREA…LNKL, EREE…HNMA, and IDDI…GAID. Positions 388, 390, 392, 399, 424, 426, 428, 430, 435, 460, 462, 464, 466, 471, 494, 496, 498, 500, and 505 each coordinate Ca(2+). Residues 526–545 form a disordered region; it reads GRPTTATSDDPSPTISSSSR. A compositionally biased stretch (low complexity) spans 528 to 545; that stretch reads PTTATSDDPSPTISSSSR.

Belongs to the protein kinase superfamily. Ser/Thr protein kinase family. CDPK subfamily.

It localises to the membrane. It catalyses the reaction L-seryl-[protein] + ATP = O-phospho-L-seryl-[protein] + ADP + H(+). The catalysed reaction is L-threonyl-[protein] + ATP = O-phospho-L-threonyl-[protein] + ADP + H(+). Its activity is regulated as follows. Activated by calcium. Autophosphorylation may play an important role in the regulation of the kinase activity. May play a role in signal transduction pathways that involve calcium as a second messenger. This is Calcium-dependent protein kinase 6 from Oryza sativa subsp. japonica (Rice).